The chain runs to 828 residues: Periplasmic nitrate reductase (828 aa).

Positions methionine 1–alanine 31 form a signal peptide, tat-type signal. The 4Fe-4S Mo/W bis-MGD-type domain maps to isoleucine 39–aspartate 95. The [4Fe-4S] cluster site is built by cysteine 46, cysteine 49, cysteine 53, and cysteine 81. Residues lysine 83, glutamine 150, asparagine 175, cysteine 179, tryptophan 212–methionine 219, serine 243–histidine 247, glutamine 262–aspartate 264, methionine 372, glutamine 376, asparagine 482, serine 508–aspartate 509, lysine 531, aspartate 558, and threonine 718–threonine 727 each bind Mo-bis(molybdopterin guanine dinucleotide). Position 794 (phenylalanine 794) interacts with substrate. The Mo-bis(molybdopterin guanine dinucleotide) site is built by asparagine 802 and lysine 819.

Belongs to the prokaryotic molybdopterin-containing oxidoreductase family. NasA/NapA/NarB subfamily. Component of the periplasmic nitrate reductase NapAB complex composed of NapA and NapB. It depends on [4Fe-4S] cluster as a cofactor. The cofactor is Mo-bis(molybdopterin guanine dinucleotide). Predicted to be exported by the Tat system. The position of the signal peptide cleavage has not been experimentally proven.

Its subcellular location is the periplasm. The enzyme catalyses 2 Fe(II)-[cytochrome] + nitrate + 2 H(+) = 2 Fe(III)-[cytochrome] + nitrite + H2O. In terms of biological role, catalytic subunit of the periplasmic nitrate reductase complex NapAB. Receives electrons from NapB and catalyzes the reduction of nitrate to nitrite. This Escherichia coli O127:H6 (strain E2348/69 / EPEC) protein is Periplasmic nitrate reductase.